Consider the following 800-residue polypeptide: Putative antiporter subunit mnhA2 (800 aa).

The next 20 membrane-spanning stretches (helical) occupy residues 1–21, 33–53, 78–98, 118–138, 167–187, 207–227, 241–261, 273–293, 300–320, 331–351, 387–407, 424–444, 472–492, 527–547, 595–615, 627–647, 651–671, 676–696, 712–732, and 768–788; these read MSLV…LLTS, IALT…PSVI, GLSL…FFYA, LFMF…MYVF, FMIT…LYIM, ALFI…SAQF, TPVS…FLLL, YIYI…ITAL, GILA…VGIG, IASI…NHAI, LVMM…GFLS, FSLI…IFTF, PWLF…IFFV, GFNI…VLAI, IIMT…RIGL, GPLE…LIFI, LTMV…FIAM, LALT…VSFS, IIKI…IFIA, and LDTL…YTLL.

It belongs to the CPA3 antiporters (TC 2.A.63) subunit A family. As to quaternary structure, may form a heterooligomeric complex that consists of seven subunits: mnhA2, mnhB2, mnhC2, mnhD2, mnhE2, mnhF2 and mnhG2.

It is found in the cell membrane. The chain is Putative antiporter subunit mnhA2 (mnhA2) from Staphylococcus aureus (strain MRSA252).